The sequence spans 146 residues: Zinc metalloproteinase-disintegrin salmosin-3 (146 aa).

Residues 1–57 (SCPCDANSCIMSATLSNEPSSRFSDCSFSLPSRFSDCSFNQYSSDIIHYHECLLNEP) enclose the Peptidase M12B domain. Disulfide bonds link C2–C37, C4–C9, C68–C87, C79–C97, C81–C92, C91–C114, C105–C111, C110–C135, and C123–C142. Positions 65 to 146 (PPVCGNYYPE…GQSGVCPRNT (82 aa)) constitute a Disintegrin domain. A Cell attachment site motif is present at residues 127 to 129 (RGD).

This sequence belongs to the venom metalloproteinase (M12B) family. P-II subfamily. P-IIb sub-subfamily. As to quaternary structure, monomer (disintegrin). Zn(2+) serves as cofactor. In terms of tissue distribution, expressed by the venom gland.

It is found in the secreted. Functionally, snake venom zinc metalloproteinase that inhibits ADP-induced platelet aggregation (probably by binding integrin alpha-IIb/beta-3 (ITGA2B/ITGB3)) and degrades fibrinogen. This Gloydius brevicauda (Korean slamosa snake) protein is Zinc metalloproteinase-disintegrin salmosin-3.